Here is a 255-residue protein sequence, read N- to C-terminus: Na(+)-translocating NADH-quinone reductase subunit C (255 aa).

The helical transmembrane segment at 11–31 (LGVVVGLSLVCSIIVSTAAVG) threads the bilayer. At threonine 223 the chain carries FMN phosphoryl threonine.

It belongs to the NqrC family. In terms of assembly, composed of six subunits; NqrA, NqrB, NqrC, NqrD, NqrE and NqrF. The cofactor is FMN.

Its subcellular location is the cell inner membrane. The catalysed reaction is a ubiquinone + n Na(+)(in) + NADH + H(+) = a ubiquinol + n Na(+)(out) + NAD(+). Functionally, NQR complex catalyzes the reduction of ubiquinone-1 to ubiquinol by two successive reactions, coupled with the transport of Na(+) ions from the cytoplasm to the periplasm. NqrA to NqrE are probably involved in the second step, the conversion of ubisemiquinone to ubiquinol. This Vibrio vulnificus (strain CMCP6) protein is Na(+)-translocating NADH-quinone reductase subunit C.